Consider the following 249-residue polypeptide: DNA repair protein RecO (249 aa).

Belongs to the RecO family.

Its function is as follows. Involved in DNA repair and RecF pathway recombination. The polypeptide is DNA repair protein RecO (Desulforudis audaxviator (strain MP104C)).